The sequence spans 122 residues: uncharacterized protein (122 aa).

It is found in the plastid. This is an uncharacterized protein from Euglena longa (Euglenophycean alga).